We begin with the raw amino-acid sequence, 204 residues long: High frequency lysogenization protein HflD homolog (204 aa).

The protein belongs to the HflD family.

The protein localises to the cytoplasm. The protein resides in the cell inner membrane. This is High frequency lysogenization protein HflD homolog from Xanthomonas campestris pv. campestris (strain ATCC 33913 / DSM 3586 / NCPPB 528 / LMG 568 / P 25).